The sequence spans 455 residues: Phosphoglucosamine mutase (455 aa).

S102 serves as the catalytic Phosphoserine intermediate. Residues S102, D241, D243, and D245 each coordinate Mg(2+). S102 carries the phosphoserine modification.

It belongs to the phosphohexose mutase family. Requires Mg(2+) as cofactor. In terms of processing, activated by phosphorylation.

It carries out the reaction alpha-D-glucosamine 1-phosphate = D-glucosamine 6-phosphate. Catalyzes the conversion of glucosamine-6-phosphate to glucosamine-1-phosphate. In Legionella pneumophila (strain Corby), this protein is Phosphoglucosamine mutase.